The sequence spans 399 residues: Dual-specificity RNA methyltransferase RlmN (399 aa).

The active-site Proton acceptor is the Glu122. A Radical SAM core domain is found at 128–371 (ETDRGTLCVS…VRTPRGRDIL (244 aa)). A disulfide bridge links Cys135 with Cys374. The [4Fe-4S] cluster site is built by Cys142, Cys146, and Cys149. Residues 200-201 (GE), Ser232, 254-256 (SLH), and Asn331 each bind S-adenosyl-L-methionine. The active-site S-methylcysteine intermediate is Cys374.

The protein belongs to the radical SAM superfamily. RlmN family. The cofactor is [4Fe-4S] cluster.

Its subcellular location is the cytoplasm. It catalyses the reaction adenosine(2503) in 23S rRNA + 2 reduced [2Fe-2S]-[ferredoxin] + 2 S-adenosyl-L-methionine = 2-methyladenosine(2503) in 23S rRNA + 5'-deoxyadenosine + L-methionine + 2 oxidized [2Fe-2S]-[ferredoxin] + S-adenosyl-L-homocysteine. The catalysed reaction is adenosine(37) in tRNA + 2 reduced [2Fe-2S]-[ferredoxin] + 2 S-adenosyl-L-methionine = 2-methyladenosine(37) in tRNA + 5'-deoxyadenosine + L-methionine + 2 oxidized [2Fe-2S]-[ferredoxin] + S-adenosyl-L-homocysteine. Functionally, specifically methylates position 2 of adenine 2503 in 23S rRNA and position 2 of adenine 37 in tRNAs. m2A2503 modification seems to play a crucial role in the proofreading step occurring at the peptidyl transferase center and thus would serve to optimize ribosomal fidelity. The polypeptide is Dual-specificity RNA methyltransferase RlmN (Rhodopseudomonas palustris (strain HaA2)).